The sequence spans 109 residues: U4-lycotoxin-Ls1a (109 aa).

Positions 1-22 are cleaved as a signal peptide; sequence MKVLVLFSVLFLTLFSYSSTEA. Positions 23–44 are excised as a propeptide; that stretch reads IDEFDSDAEEDMLSLMANEQVR. The knottin domain stretch occupies residues 45 to 88; it reads AKACTPRLHDCSHDRHSCCRGELFKDVCYCFYPEGEDKTEVCSC. Disulfide bonds link C48/C63, C55/C72, C62/C88, and C74/C86. Residues 89–108 are linear cationic cytotoxin domain; the sequence is QQPKSHKYIEKVVDKAKTVV.

Belongs to the neurotoxin 19 (CSTX) family. 05 (U4-Lctx) subfamily. In terms of tissue distribution, expressed by the venom gland.

The protein resides in the secreted. In terms of biological role, enhances the high-affinity desensitization of human P2RX3 purinoceptors. The polypeptide is U4-lycotoxin-Ls1a (Lycosa singoriensis (Wolf spider)).